Reading from the N-terminus, the 89-residue chain is Small ribosomal subunit protein uS15c (89 aa).

Belongs to the universal ribosomal protein uS15 family. As to quaternary structure, part of the 30S ribosomal subunit.

It is found in the plastid. It localises to the chloroplast. The chain is Small ribosomal subunit protein uS15c (rps15) from Chloranthus spicatus (Chulantree).